The chain runs to 88 residues: Large ribosomal subunit protein eL31 (88 aa).

It belongs to the eukaryotic ribosomal protein eL31 family.

This chain is Large ribosomal subunit protein eL31, found in Saccharolobus islandicus (strain Y.N.15.51 / Yellowstone #2) (Sulfolobus islandicus).